Consider the following 301-residue polypeptide: tRNA (guanine-N(7)-)-methyltransferase (301 aa).

The tract at residues 1–26 (MSETPDSPRPVTPGSQASFGTYGGRP) is disordered. S-adenosyl-L-methionine is bound by residues Glu85, Glu110, Asn137, and Asp160. Asp160 is a catalytic residue. Lys164 and Asp196 together coordinate substrate. Residues 244-270 (APVREGRAPVSTEHTGPNEGVDEEGGW) are disordered. A substrate-binding site is contributed by 280–283 (TSFE).

Belongs to the class I-like SAM-binding methyltransferase superfamily. TrmB family.

The enzyme catalyses guanosine(46) in tRNA + S-adenosyl-L-methionine = N(7)-methylguanosine(46) in tRNA + S-adenosyl-L-homocysteine. It participates in tRNA modification; N(7)-methylguanine-tRNA biosynthesis. Catalyzes the formation of N(7)-methylguanine at position 46 (m7G46) in tRNA. The polypeptide is tRNA (guanine-N(7)-)-methyltransferase (Paenarthrobacter aurescens (strain TC1)).